We begin with the raw amino-acid sequence, 132 residues long: Small ribosomal subunit protein uS11 (132 aa).

Positions 1–16 are enriched in basic residues; that stretch reads MAAGMKGKRSRRRKER. Positions 1–20 are disordered; it reads MAAGMKGKRSRRRKERKNVE.

The protein belongs to the universal ribosomal protein uS11 family. In terms of assembly, part of the 30S ribosomal subunit. Interacts with proteins S7 and S18. Binds to IF-3.

In terms of biological role, located on the platform of the 30S subunit, it bridges several disparate RNA helices of the 16S rRNA. Forms part of the Shine-Dalgarno cleft in the 70S ribosome. The polypeptide is Small ribosomal subunit protein uS11 (Clostridium botulinum (strain Loch Maree / Type A3)).